The primary structure comprises 256 residues: Imidazole glycerol phosphate synthase subunit HisF (256 aa).

Residues Asp11 and Asp130 contribute to the active site.

This sequence belongs to the HisA/HisF family. As to quaternary structure, heterodimer of HisH and HisF.

The protein resides in the cytoplasm. It carries out the reaction 5-[(5-phospho-1-deoxy-D-ribulos-1-ylimino)methylamino]-1-(5-phospho-beta-D-ribosyl)imidazole-4-carboxamide + L-glutamine = D-erythro-1-(imidazol-4-yl)glycerol 3-phosphate + 5-amino-1-(5-phospho-beta-D-ribosyl)imidazole-4-carboxamide + L-glutamate + H(+). Its pathway is amino-acid biosynthesis; L-histidine biosynthesis; L-histidine from 5-phospho-alpha-D-ribose 1-diphosphate: step 5/9. Functionally, IGPS catalyzes the conversion of PRFAR and glutamine to IGP, AICAR and glutamate. The HisF subunit catalyzes the cyclization activity that produces IGP and AICAR from PRFAR using the ammonia provided by the HisH subunit. The chain is Imidazole glycerol phosphate synthase subunit HisF from Prochlorococcus marinus (strain MIT 9215).